The chain runs to 200 residues: dTTP/UTP pyrophosphatase (200 aa).

Catalysis depends on Asp-81, which acts as the Proton acceptor.

The protein belongs to the Maf family. YhdE subfamily. A divalent metal cation is required as a cofactor.

The protein resides in the cytoplasm. It catalyses the reaction dTTP + H2O = dTMP + diphosphate + H(+). It carries out the reaction UTP + H2O = UMP + diphosphate + H(+). Nucleoside triphosphate pyrophosphatase that hydrolyzes dTTP and UTP. May have a dual role in cell division arrest and in preventing the incorporation of modified nucleotides into cellular nucleic acids. This chain is dTTP/UTP pyrophosphatase, found in Cupriavidus pinatubonensis (strain JMP 134 / LMG 1197) (Cupriavidus necator (strain JMP 134)).